A 414-amino-acid chain; its full sequence is Isocitrate dehydrogenase [NADP] cytoplasmic (414 aa).

An N-acetylserine modification is found at Ser2. Tyr42 carries the post-translational modification Phosphotyrosine. 75–77 (TIT) contacts NADP(+). A substrate-binding site is contributed by Thr77. Position 81 is an N6-acetyllysine (Lys81). An NADP(+)-binding site is contributed by Arg82. Residues 94 to 100 (SPNGTIR) and Arg109 contribute to the substrate site. An N6-succinyllysine modification is found at Lys126. Residues Arg132 and Lys212 each contribute to the substrate site. N6-acetyllysine is present on residues Lys224, Lys233, and Lys243. Asp252 lines the Mn(2+) pocket. Lys260 contributes to the NADP(+) binding site. Mn(2+) contacts are provided by Asp275 and Asp279. An NADP(+)-binding site is contributed by 310 to 315 (GTVTRH). Residue Lys321 is modified to N6-acetyllysine. Asn328 provides a ligand contact to NADP(+). Ser389 carries the phosphoserine modification. Lys400 is subject to N6-succinyllysine.

The protein belongs to the isocitrate and isopropylmalate dehydrogenases family. Homodimer. Mg(2+) is required as a cofactor. It depends on Mn(2+) as a cofactor. In terms of processing, the N-terminus is blocked. Post-translationally, acetylation at Lys-374 dramatically reduces catalytic activity. In terms of tissue distribution, ubiquitous.

The protein localises to the cytoplasm. The protein resides in the cytosol. Its subcellular location is the peroxisome. The enzyme catalyses D-threo-isocitrate + NADP(+) = 2-oxoglutarate + CO2 + NADPH. Functionally, catalyzes the NADP(+)-dependent oxidative decarboxylation of isocitrate (D-threo-isocitrate) to 2-ketoglutarate (2-oxoglutarate), which is required by other enzymes such as the phytanoyl-CoA dioxygenase. Plays a critical role in the generation of NADPH, an important cofactor in many biosynthesis pathways. May act as a corneal epithelial crystallin and may be involved in maintaining corneal epithelial transparency. This chain is Isocitrate dehydrogenase [NADP] cytoplasmic (Idh1), found in Rattus norvegicus (Rat).